A 211-amino-acid chain; its full sequence is Holliday junction branch migration complex subunit RuvA (211 aa).

Positions 1–64 (MIGRLRGMLV…EDAQLLYGFA (64 aa)) are domain I. The tract at residues 65–143 (NKVERKLFRL…DWQAQQIHLV (79 aa)) is domain II. Residues 144 to 162 (SDDGVIPEQLSAELSQETT) form a flexible linker region. The interval 163 to 211 (FVNDNKGDAINALLSLGYKQVQADKAVKSVYNRGMSSENIIRDALKSMI) is domain III.

This sequence belongs to the RuvA family. In terms of assembly, homotetramer. Forms an RuvA(8)-RuvB(12)-Holliday junction (HJ) complex. HJ DNA is sandwiched between 2 RuvA tetramers; dsDNA enters through RuvA and exits via RuvB. An RuvB hexamer assembles on each DNA strand where it exits the tetramer. Each RuvB hexamer is contacted by two RuvA subunits (via domain III) on 2 adjacent RuvB subunits; this complex drives branch migration. In the full resolvosome a probable DNA-RuvA(4)-RuvB(12)-RuvC(2) complex forms which resolves the HJ.

It is found in the cytoplasm. In terms of biological role, the RuvA-RuvB-RuvC complex processes Holliday junction (HJ) DNA during genetic recombination and DNA repair, while the RuvA-RuvB complex plays an important role in the rescue of blocked DNA replication forks via replication fork reversal (RFR). RuvA specifically binds to HJ cruciform DNA, conferring on it an open structure. The RuvB hexamer acts as an ATP-dependent pump, pulling dsDNA into and through the RuvAB complex. HJ branch migration allows RuvC to scan DNA until it finds its consensus sequence, where it cleaves and resolves the cruciform DNA. The polypeptide is Holliday junction branch migration complex subunit RuvA (Colwellia psychrerythraea (strain 34H / ATCC BAA-681) (Vibrio psychroerythus)).